Here is a 354-residue protein sequence, read N- to C-terminus: P2Y purinoceptor 13 (354 aa).

The Extracellular segment spans residues 1–49; sequence MTAAIRRQRELSILPKVTLEAMNTTVMQGFNRSERCPRDTRIVQLVFPA. Residues Asn-23 and Asn-31 are each glycosylated (N-linked (GlcNAc...) asparagine). Residues 50–70 traverse the membrane as a helical segment; that stretch reads LYTVVFLTGILLNTLALWVFV. At 71 to 77 the chain is on the cytoplasmic side; the sequence is HIPSSST. A helical transmembrane segment spans residues 78 to 98; sequence FIIYLKNTLVADLIMTLMLPF. Residues 99–117 are Extracellular-facing; the sequence is KILSDSHLAPWQLRAFVCR. Cys-116 and Cys-194 are oxidised to a cystine. A helical membrane pass occupies residues 118–138; the sequence is FSSVIFYETMYVGIVLLGLIA. Residues 139 to 161 are Cytoplasmic-facing; that stretch reads FDRFLKIIRPLRNIFLKKPVFAK. Residues 162 to 182 form a helical membrane-spanning segment; sequence TVSIFIWFFLFFISLPNTILS. Residues 183-211 are Extracellular-facing; sequence NKEATPSSVKKCASLKGPLGLKWHQMVNN. A helical transmembrane segment spans residues 212–232; sequence ICQFIFWTVFILMLVFYVVIA. Residues 233–252 lie on the Cytoplasmic side of the membrane; it reads KKVYDSYRKSKSKDRKNNKK. A helical transmembrane segment spans residues 253 to 273; sequence LEGKVFVVVAVFFVCFAPFHF. Over 274 to 300 the chain is Extracellular; it reads ARVPYTHSQTNNKTDCRLQNQLFIAKE. N-linked (GlcNAc...) asparagine glycosylation is present at Asn-285. A helical transmembrane segment spans residues 301 to 321; the sequence is TTLFLAATNICMDPLIYIFLC. Residues 322–333 lie on the Cytoplasmic side of the membrane; sequence KKFTEKLPCMQG. The disordered stretch occupies residues 335–354; it reads KTTASSQENHSSQTDNITLG.

Belongs to the G-protein coupled receptor 1 family. As to expression, strong expression in spleen and adult brain. Lower expression in placenta, lung, liver, spinal cord, thymus, small intestine, uterus, stomach, testis, fetal brain, and adrenal gland. Not detected in pancreas, heart, kidney, skeletal muscle, ovary or fetal aorta. Clearly detected in lymph node and bone marrow, weakly detected in peripheral blood mononuclear cells (PBMC) and in peripheral blood leukocytes (PBL), but not detected in polymorphonuclear cells (PMN). In the brain, detected in all brain regions examined.

Its subcellular location is the cell membrane. Functionally, receptor for ADP. Coupled to G(i)-proteins. May play a role in hematopoiesis and the immune system. This Homo sapiens (Human) protein is P2Y purinoceptor 13 (P2RY13).